We begin with the raw amino-acid sequence, 78 residues long: DNA gyrase inhibitor YacG (78 aa).

Zn(2+) contacts are provided by Cys-7, Cys-10, Cys-26, and Cys-30.

It belongs to the DNA gyrase inhibitor YacG family. Interacts with GyrB. Requires Zn(2+) as cofactor.

Functionally, inhibits all the catalytic activities of DNA gyrase by preventing its interaction with DNA. Acts by binding directly to the C-terminal domain of GyrB, which probably disrupts DNA binding by the gyrase. This chain is DNA gyrase inhibitor YacG, found in Colwellia psychrerythraea (strain 34H / ATCC BAA-681) (Vibrio psychroerythus).